A 737-amino-acid polypeptide reads, in one-letter code: Phosphoribosylformylglycinamidine synthase subunit PurL (737 aa).

The active site involves His50. ATP is bound by residues Tyr53 and Lys92. Glu94 lines the Mg(2+) pocket. Substrate is bound by residues Ser95 to His98 and Arg117. Catalysis depends on His96, which acts as the Proton acceptor. Residue Asp118 coordinates Mg(2+). Gln241 lines the substrate pocket. Asp269 contacts Mg(2+). Glu313–Gln315 provides a ligand contact to substrate. ATP is bound by residues Asp495 and Gly532. Asn533 is a Mg(2+) binding site. Ser535 contributes to the substrate binding site.

It belongs to the FGAMS family. As to quaternary structure, monomer. Part of the FGAM synthase complex composed of 1 PurL, 1 PurQ and 2 PurS subunits.

It localises to the cytoplasm. The enzyme catalyses N(2)-formyl-N(1)-(5-phospho-beta-D-ribosyl)glycinamide + L-glutamine + ATP + H2O = 2-formamido-N(1)-(5-O-phospho-beta-D-ribosyl)acetamidine + L-glutamate + ADP + phosphate + H(+). Its pathway is purine metabolism; IMP biosynthesis via de novo pathway; 5-amino-1-(5-phospho-D-ribosyl)imidazole from N(2)-formyl-N(1)-(5-phospho-D-ribosyl)glycinamide: step 1/2. Part of the phosphoribosylformylglycinamidine synthase complex involved in the purines biosynthetic pathway. Catalyzes the ATP-dependent conversion of formylglycinamide ribonucleotide (FGAR) and glutamine to yield formylglycinamidine ribonucleotide (FGAM) and glutamate. The FGAM synthase complex is composed of three subunits. PurQ produces an ammonia molecule by converting glutamine to glutamate. PurL transfers the ammonia molecule to FGAR to form FGAM in an ATP-dependent manner. PurS interacts with PurQ and PurL and is thought to assist in the transfer of the ammonia molecule from PurQ to PurL. This is Phosphoribosylformylglycinamidine synthase subunit PurL from Bartonella bacilliformis (strain ATCC 35685 / KC583 / Herrer 020/F12,63).